The following is a 413-amino-acid chain: GTPase HflX (413 aa).

One can recognise a Hflx-type G domain in the interval 200 to 386; sequence VRVALVGYTN…KVYETVREIH (187 aa). Residues 206–213, 231–235, 252–255, 318–321, and 364–366 each bind GTP; these read GYTNVGKS, FATLD, DTVG, NKID, and SAT. Mg(2+) is bound by residues serine 213 and threonine 233.

It belongs to the TRAFAC class OBG-HflX-like GTPase superfamily. HflX GTPase family. As to quaternary structure, monomer. Associates with the 50S ribosomal subunit. Requires Mg(2+) as cofactor.

It localises to the cytoplasm. In terms of biological role, GTPase that associates with the 50S ribosomal subunit and may have a role during protein synthesis or ribosome biogenesis. The polypeptide is GTPase HflX (Flavobacterium psychrophilum (strain ATCC 49511 / DSM 21280 / CIP 103535 / JIP02/86)).